The chain runs to 152 residues: Lipoprotein signal peptidase (152 aa).

2 helical membrane-spanning segments follow: residues 55 to 75 and 85 to 105; these read NKMW…VFYM and LGIS…DRVF. Active-site residues include Asp-111 and Asp-129. A helical membrane pass occupies residues 124-144; that stretch reads VFNIADSALCIGVVLIIIQTL.

Belongs to the peptidase A8 family.

Its subcellular location is the cell membrane. It carries out the reaction Release of signal peptides from bacterial membrane prolipoproteins. Hydrolyzes -Xaa-Yaa-Zaa-|-(S,diacylglyceryl)Cys-, in which Xaa is hydrophobic (preferably Leu), and Yaa (Ala or Ser) and Zaa (Gly or Ala) have small, neutral side chains.. It participates in protein modification; lipoprotein biosynthesis (signal peptide cleavage). In terms of biological role, this protein specifically catalyzes the removal of signal peptides from prolipoproteins. The polypeptide is Lipoprotein signal peptidase (Bacillus cereus (strain ZK / E33L)).